The primary structure comprises 179 residues: MASHIGKLPIAIPAGVEVKIEGQNFSAKGAKGSDSYVVPEGITAAVEGNEIVLTAADDLRPTRAKHGLARSIMAGMVKGVHDGYSKTLEIVGTGYRAVAKGKGIEFFLGYSHTITVNPPEGITLKVTDANHVVVEGTDKQVVGQVAANIRKLRAPEPYKGKGIKYADERILRKAGKAGK.

Belongs to the universal ribosomal protein uL6 family. As to quaternary structure, part of the 50S ribosomal subunit.

Functionally, this protein binds to the 23S rRNA, and is important in its secondary structure. It is located near the subunit interface in the base of the L7/L12 stalk, and near the tRNA binding site of the peptidyltransferase center. In Bifidobacterium longum subsp. infantis (strain ATCC 15697 / DSM 20088 / JCM 1222 / NCTC 11817 / S12), this protein is Large ribosomal subunit protein uL6.